We begin with the raw amino-acid sequence, 35 residues long: Photosystem II reaction center protein T (35 aa).

The chain crosses the membrane as a helical span at residues 3-23 (ALVYTFLLVSTLGIIFFAIFF).

The protein belongs to the PsbT family. PSII is composed of 1 copy each of membrane proteins PsbA, PsbB, PsbC, PsbD, PsbE, PsbF, PsbH, PsbI, PsbJ, PsbK, PsbL, PsbM, PsbT, PsbY, PsbZ, Psb30/Ycf12, at least 3 peripheral proteins of the oxygen-evolving complex and a large number of cofactors. It forms dimeric complexes.

The protein localises to the plastid. The protein resides in the chloroplast thylakoid membrane. In terms of biological role, found at the monomer-monomer interface of the photosystem II (PS II) dimer, plays a role in assembly and dimerization of PSII. PSII is a light-driven water plastoquinone oxidoreductase, using light energy to abstract electrons from H(2)O, generating a proton gradient subsequently used for ATP formation. This is Photosystem II reaction center protein T from Amborella trichopoda.